Reading from the N-terminus, the 194-residue chain is GTP cyclohydrolase 1 (194 aa).

Residues C83, H86, and C155 each contribute to the Zn(2+) site.

The protein belongs to the GTP cyclohydrolase I family. Toroid-shaped homodecamer, composed of two pentamers of five dimers.

It catalyses the reaction GTP + H2O = 7,8-dihydroneopterin 3'-triphosphate + formate + H(+). Its pathway is cofactor biosynthesis; 7,8-dihydroneopterin triphosphate biosynthesis; 7,8-dihydroneopterin triphosphate from GTP: step 1/1. This Streptococcus pyogenes protein is GTP cyclohydrolase 1 (folE).